Reading from the N-terminus, the 170-residue chain is Neurotensin/neuromedin N (170 aa).

An N-terminal signal peptide occupies residues 1–23 (MMAGMKIQLVCMILLAFSSWSLC).

Belongs to the neurotensin family. As to quaternary structure, interacts with NTSR1. Interacts with SORT1. Interacts with SORL1. Neurotensin is cleaved and degraded by Angiotensin-converting enzyme (ACE) and neprilysin (MME).

It localises to the secreted. It is found in the cytoplasmic vesicle. The protein resides in the secretory vesicle. Its function is as follows. Neurotensin may play an endocrine or paracrine role in the regulation of fat metabolism. It causes contraction of smooth muscle. This chain is Neurotensin/neuromedin N (NTS), found in Canis lupus familiaris (Dog).